The following is a 578-amino-acid chain: Multidrug resistance-like ATP-binding protein MdlB (578 aa).

The ABC transmembrane type-1 domain maps to 25–308 (LILGFTLLLF…ITSQQSIFQQ (284 aa)). Helical transmembrane passes span 26-46 (ILGFTLLLFSSIFEVLNPILI), 59-79 (VNYSLKIITYYLILQILAAIL), 143-163 (SLFQNIILILITLITMFILEW), 166-186 (ACIASIIFPIALIIMLLYQYF), 196-216 (VYIANIYNIFNEIINGIDVIQ), and 260-280 (LILCGLILIFGIYPIGFFEIG). One can recognise an ABC transporter domain in the interval 339–573 (IKVKNLYFSY…KSYYKNMYYS (235 aa)). ATP is bound at residue 373 to 380 (GRTGSGKS).

It belongs to the ABC transporter superfamily. Drug exporter-2 (TC 3.A.1.117) family.

It localises to the cell membrane. The enzyme catalyses ATP + H2O + xenobioticSide 1 = ADP + phosphate + xenobioticSide 2.. This Buchnera aphidicola subsp. Baizongia pistaciae (strain Bp) protein is Multidrug resistance-like ATP-binding protein MdlB (mdlB).